Consider the following 332-residue polypeptide: Arabinogalactan endo-beta-1,4-galactanase (332 aa).

N-linked (GlcNAc...) asparagine glycosylation occurs at asparagine 111. Residue glutamate 135 is the Proton donor of the active site. Glutamate 245 serves as the catalytic Nucleophile.

The protein belongs to the glycosyl hydrolase 53 family.

The catalysed reaction is The enzyme specifically hydrolyzes (1-&gt;4)-beta-D-galactosidic linkages in type I arabinogalactans.. This chain is Arabinogalactan endo-beta-1,4-galactanase, found in Humicola insolens (Soft-rot fungus).